The following is a 78-amino-acid chain: Small ribosomal subunit protein bS18 (78 aa).

The protein belongs to the bacterial ribosomal protein bS18 family. As to quaternary structure, part of the 30S ribosomal subunit. Forms a tight heterodimer with protein bS6.

Binds as a heterodimer with protein bS6 to the central domain of the 16S rRNA, where it helps stabilize the platform of the 30S subunit. The chain is Small ribosomal subunit protein bS18 from Lactobacillus delbrueckii subsp. bulgaricus (strain ATCC 11842 / DSM 20081 / BCRC 10696 / JCM 1002 / NBRC 13953 / NCIMB 11778 / NCTC 12712 / WDCM 00102 / Lb 14).